Consider the following 278-residue polypeptide: NH(3)-dependent NAD(+) synthetase (278 aa).

39 to 46 (GVSGGVDS) is an ATP binding site. Mg(2+) is bound at residue Asp-45. Arg-121 contacts deamido-NAD(+). Thr-141 is an ATP binding site. Glu-146 serves as a coordination point for Mg(2+). Lys-154 and Asp-161 together coordinate deamido-NAD(+). ATP is bound by residues Lys-170 and Ser-192. 252–253 (HK) lines the deamido-NAD(+) pocket.

Belongs to the NAD synthetase family. Homodimer.

The enzyme catalyses deamido-NAD(+) + NH4(+) + ATP = AMP + diphosphate + NAD(+) + H(+). It functions in the pathway cofactor biosynthesis; NAD(+) biosynthesis; NAD(+) from deamido-NAD(+) (ammonia route): step 1/1. Functionally, catalyzes the ATP-dependent amidation of deamido-NAD to form NAD. Uses ammonia as a nitrogen source. This Saccharolobus solfataricus (strain ATCC 35092 / DSM 1617 / JCM 11322 / P2) (Sulfolobus solfataricus) protein is NH(3)-dependent NAD(+) synthetase.